The sequence spans 249 residues: Uridylate kinase (249 aa).

Residue 22 to 25 (KISG) coordinates ATP. Residues 30-35 (GTQGFG) are involved in allosteric activation by GTP. Glycine 64 is a binding site for UMP. The ATP site is built by glycine 65 and arginine 69. UMP-binding positions include aspartate 84 and 145–152 (TGNPYFTT). Residues asparagine 173, tyrosine 179, and aspartate 182 each contribute to the ATP site.

Belongs to the UMP kinase family. As to quaternary structure, homohexamer.

It is found in the cytoplasm. It carries out the reaction UMP + ATP = UDP + ADP. It functions in the pathway pyrimidine metabolism; CTP biosynthesis via de novo pathway; UDP from UMP (UMPK route): step 1/1. Its activity is regulated as follows. Allosterically activated by GTP. Inhibited by UTP. Catalyzes the reversible phosphorylation of UMP to UDP. This is Uridylate kinase from Ruegeria sp. (strain TM1040) (Silicibacter sp.).